The primary structure comprises 411 residues: Translation initiation factor 2 subunit gamma (411 aa).

The tr-type G domain occupies 9–203 (QAEVNIGMVG…AIEDFIPTPK (195 aa)). The tract at residues 18 to 25 (GHVDHGKT) is G1. Mg(2+) is bound by residues Asp21, Thr25, Gly46, and Thr48. 21–26 (DHGKTT) is a binding site for GTP. Residues 46-50 (GITIK) are G2. The Zn(2+) site is built by Cys61, Cys64, Cys73, and Cys76. The segment at 90-93 (DAPG) is G3. GTP-binding positions include 146–149 (NKIE) and 181–183 (SAL). The tract at residues 146–149 (NKIE) is G4. A G5 region spans residues 181–183 (SAL).

The protein belongs to the TRAFAC class translation factor GTPase superfamily. Classic translation factor GTPase family. EIF2G subfamily. In terms of assembly, heterotrimer composed of an alpha, a beta and a gamma chain. The cofactor is Mg(2+).

It catalyses the reaction GTP + H2O = GDP + phosphate + H(+). Its function is as follows. eIF-2 functions in the early steps of protein synthesis by forming a ternary complex with GTP and initiator tRNA. This chain is Translation initiation factor 2 subunit gamma, found in Pyrococcus horikoshii (strain ATCC 700860 / DSM 12428 / JCM 9974 / NBRC 100139 / OT-3).